Here is a 236-residue protein sequence, read N- to C-terminus: Phosphoribosylaminoimidazole-succinocarboxamide synthase (236 aa).

Belongs to the SAICAR synthetase family.

It carries out the reaction 5-amino-1-(5-phospho-D-ribosyl)imidazole-4-carboxylate + L-aspartate + ATP = (2S)-2-[5-amino-1-(5-phospho-beta-D-ribosyl)imidazole-4-carboxamido]succinate + ADP + phosphate + 2 H(+). Its pathway is purine metabolism; IMP biosynthesis via de novo pathway; 5-amino-1-(5-phospho-D-ribosyl)imidazole-4-carboxamide from 5-amino-1-(5-phospho-D-ribosyl)imidazole-4-carboxylate: step 1/2. In Rickettsia canadensis (strain McKiel), this protein is Phosphoribosylaminoimidazole-succinocarboxamide synthase.